A 261-amino-acid polypeptide reads, in one-letter code: uncharacterized protein (261 aa).

Helical transmembrane passes span W15–C35, V87–A107, and L131–I151. Over residues L234 to E246 the composition is skewed to basic and acidic residues. The segment at L234–Q261 is disordered.

It is found in the membrane. This is an uncharacterized protein from Caenorhabditis elegans.